We begin with the raw amino-acid sequence, 357 residues long: Palmitoyltransferase ZDHHC20-A (357 aa).

The Cytoplasmic segment spans residues 1 to 14 (MAPSHAVRCCQRGL). The helical transmembrane segment at 15-35 (SWIPVIFINLVVCWSYYAYVV) threads the bilayer. The Lumenal portion of the chain corresponds to 36–50 (ELCIYTIPNVNEQVI). The chain crosses the membrane as a helical span at residues 51–71 (YLVVFHAFFFMFMWSYWKTIS). The Cytoplasmic portion of the chain corresponds to 72–166 (SKPTNPSKEF…NNCVGFSNYK (95 aa)). Residues 123-173 (RYCDRCQLIKPDRCHHCSTCDKCVLKMDHHCPWVNNCVGFSNYKFFVLFLA) form the DHHC domain. C153 (S-palmitoyl cysteine intermediate) is an active-site residue. The chain crosses the membrane as a helical span at residues 167-187 (FFVLFLAYSMLYCVYIAATVL). The Lumenal segment spans residues 188 to 204 (QYFIKFWTNQLPDTHAK). A helical membrane pass occupies residues 205–228 (FHVLFLFFVAAMFFISILSLFSYH). Topologically, residues 229-357 (LWLVGKNRTT…PVCVTLENES (129 aa)) are cytoplasmic.

The protein belongs to the DHHC palmitoyltransferase family.

The protein localises to the golgi apparatus membrane. It is found in the cell membrane. Its subcellular location is the cytoplasm. The protein resides in the perinuclear region. It localises to the endoplasmic reticulum membrane. The protein localises to the endoplasmic reticulum-Golgi intermediate compartment membrane. It carries out the reaction L-cysteinyl-[protein] + hexadecanoyl-CoA = S-hexadecanoyl-L-cysteinyl-[protein] + CoA. It catalyses the reaction L-cysteinyl-[protein] + tetradecanoyl-CoA = S-tetradecanoyl-L-cysteinyl-[protein] + CoA. The catalysed reaction is L-cysteinyl-[protein] + octadecanoyl-CoA = S-octadecanoyl-L-cysteinyl-[protein] + CoA. Functionally, palmitoyltransferase that could catalyze the addition of palmitate onto various protein substrates. Catalyzes palmitoylation of Cys residues on protein substrates and has a preference for acyl-CoA with C16 fatty acid chains but may also utilize acyl-CoA with C14 and C18 fatty acid chains. The chain is Palmitoyltransferase ZDHHC20-A from Danio rerio (Zebrafish).